A 492-amino-acid polypeptide reads, in one-letter code: Cysteine--tRNA ligase (492 aa).

Cys-29 contacts Zn(2+). The short motif at 31–41 (PTVYDYAHIGN) is the 'HIGH' region element. Residues Cys-222, His-247, and Glu-251 each contribute to the Zn(2+) site. A 'KMSKS' region motif is present at residues 279-283 (KMSKS). Lys-282 is an ATP binding site.

It belongs to the class-I aminoacyl-tRNA synthetase family. In terms of assembly, monomer. Requires Zn(2+) as cofactor.

It localises to the cytoplasm. It catalyses the reaction tRNA(Cys) + L-cysteine + ATP = L-cysteinyl-tRNA(Cys) + AMP + diphosphate. The sequence is that of Cysteine--tRNA ligase from Treponema denticola (strain ATCC 35405 / DSM 14222 / CIP 103919 / JCM 8153 / KCTC 15104).